We begin with the raw amino-acid sequence, 492 residues long: Probable folate-biopterin transporter 5 (492 aa).

The next 12 membrane-spanning stretches (helical) occupy residues 46–66 (VFAV…LGHV), 92–112 (ISWI…PIFG), 117–137 (PYFI…SLQS), 142–162 (YLAL…DVTI), 186–206 (LSYS…VHLV), 210–230 (GVFG…VLFS), 264–285 (LYMF…YWFT), 298–318 (VGFI…LYNL), 328–348 (LFLW…ILVL), 361–381 (FIVV…MVIF), 396–416 (FFAL…WLGG), and 433–453 (WLAV…LFLV).

This sequence belongs to the major facilitator superfamily. Folate-biopterin transporter (TC 2.A.71) family.

Its subcellular location is the membrane. In terms of biological role, could mediate folate transport. The chain is Probable folate-biopterin transporter 5 from Arabidopsis thaliana (Mouse-ear cress).